The primary structure comprises 232 residues: MAHKRGKKYQDAAKQVEADKVYGMGDAIDLVKKIDFAKFDATVEVAFKLNVDTKQADQQLRGALVLPNGTGKETTVIVFAKGDQAKAAEAAGADVVGEQDLVERIQDGWLDFDVAIATPDMMAQVGRLGRVLGPKGLMPNPKTGTVTMNVEKAVSDAKNGQVTYRTDRDGNVAVPFGKVSFDADKLAGNLKSIAETIVRIRPAAVRGTYVQHVSISSTFGPSVDVDLASLLA.

This sequence belongs to the universal ribosomal protein uL1 family. In terms of assembly, part of the 50S ribosomal subunit.

Its function is as follows. Binds directly to 23S rRNA. The L1 stalk is quite mobile in the ribosome, and is involved in E site tRNA release. In terms of biological role, protein L1 is also a translational repressor protein, it controls the translation of the L11 operon by binding to its mRNA. This is Large ribosomal subunit protein uL1 from Levilactobacillus brevis (strain ATCC 367 / BCRC 12310 / CIP 105137 / JCM 1170 / LMG 11437 / NCIMB 947 / NCTC 947) (Lactobacillus brevis).